The sequence spans 504 residues: Maturase K (504 aa).

The protein belongs to the intron maturase 2 family. MatK subfamily.

Its subcellular location is the plastid. The protein localises to the chloroplast. Functionally, usually encoded in the trnK tRNA gene intron. Probably assists in splicing its own and other chloroplast group II introns. This is Maturase K from Berzelia lanuginosa (Buttonbush).